The primary structure comprises 293 residues: Ubiquinone biosynthesis protein COQ9-B, mitochondrial (293 aa).

The tract at residues leucine 21–glutamine 73 is disordered. The segment covering proline 29–alanine 38 has biased composition (polar residues). Residues alanine 61 to glutamate 72 show a composition bias toward acidic residues. Arginine 219 contacts a 1,2-diacylglycero-3-phosphoethanolamine.

The protein belongs to the COQ9 family. As to quaternary structure, homodimer. Heterodimer; two heterodimers of COQ7:COQ9 come together on the same side of the lipid pseudo-bilayer and form a curved tetramer with a hydrophobic surface suitable for membrane interaction. These two tetramers assemble into a soluble octamer with a pseudo-bilayer of lipids captured within. Interacts with COQ7; this interaction allows ubiquinone (CoQ) isoprene intermediates presentation to COQ7 and facilitates the COQ7-mediated hydroxylase step.

The protein localises to the mitochondrion. The protein operates within cofactor biosynthesis; ubiquinone biosynthesis. Functionally, membrane-associated protein that warps the membrane surface to access and bind aromatic isoprenes with high specificity, including ubiquinone (CoQ) isoprene intermediates and presents them directly to COQ7, therefore facilitating the COQ7-mediated hydroxylase step. Participates in the biosynthesis of coenzyme Q, also named ubiquinone, an essential lipid-soluble electron transporter for aerobic cellular respiration. The polypeptide is Ubiquinone biosynthesis protein COQ9-B, mitochondrial (coq9-b) (Xenopus laevis (African clawed frog)).